The sequence spans 447 residues: ATP-dependent protease ATPase subunit HslU (447 aa).

Residues Ile18, 60-65 (GVGKTE), Asp259, Glu325, and Arg397 contribute to the ATP site.

Belongs to the ClpX chaperone family. HslU subfamily. A double ring-shaped homohexamer of HslV is capped on each side by a ring-shaped HslU homohexamer. The assembly of the HslU/HslV complex is dependent on binding of ATP.

It localises to the cytoplasm. In terms of biological role, ATPase subunit of a proteasome-like degradation complex; this subunit has chaperone activity. The binding of ATP and its subsequent hydrolysis by HslU are essential for unfolding of protein substrates subsequently hydrolyzed by HslV. HslU recognizes the N-terminal part of its protein substrates and unfolds these before they are guided to HslV for hydrolysis. The polypeptide is ATP-dependent protease ATPase subunit HslU (Burkholderia ambifaria (strain ATCC BAA-244 / DSM 16087 / CCUG 44356 / LMG 19182 / AMMD) (Burkholderia cepacia (strain AMMD))).